The primary structure comprises 216 residues: MGAARLLPNLTLCLQLLILCCQTQGENHPSPNFNQYVRDQGAMTDQLSRRQIREYQLYSRTSGKHVQVTGRRISATAEDGNKFAKLIVETDTFGSRVRIKGAESEKYICMNKRGKLIGKPSGKSKDCVFTEIVLENNYTAFQNARHEGWFMAFTRQGRPRQASRSRQNQREAHFIKRLYQGQLPFPNHAEKQKQFEFVGSAPTRRTKRTRRPQPLT.

Positions 1–22 are cleaved as a signal peptide; it reads MGAARLLPNLTLCLQLLILCCQ. An N-linked (GlcNAc...) asparagine glycan is attached at Asn137. The tract at residues 190 to 216 is disordered; that stretch reads EKQKQFEFVGSAPTRRTKRTRRPQPLT. Residues 204–216 are compositionally biased toward basic residues; sequence RRTKRTRRPQPLT.

This sequence belongs to the heparin-binding growth factors family. In terms of assembly, interacts with FGFR3 and FGFR4. Preferentially expressed in the embryonic brain.

It localises to the secreted. In terms of biological role, plays an important role in the regulation of embryonic development and as signaling molecule in the induction and patterning of the embryonic brain. Required for normal brain development. The polypeptide is Fibroblast growth factor 17 (FGF17) (Homo sapiens (Human)).